Here is a 339-residue protein sequence, read N- to C-terminus: Dihydroorotate dehydrogenase (quinone) (339 aa).

FMN contacts are provided by residues 62-66 and threonine 86; that span reads AGMDK. Lysine 66 contributes to the substrate binding site. Position 111 to 115 (111 to 115) interacts with substrate; it reads NRMGF. 2 residues coordinate FMN: asparagine 139 and asparagine 172. Asparagine 172 contributes to the substrate binding site. Serine 175 functions as the Nucleophile in the catalytic mechanism. Asparagine 177 contacts substrate. The FMN site is built by lysine 217 and threonine 245. 246–247 contacts substrate; sequence NT. Residues glycine 268, glycine 297, and 318 to 319 each bind FMN; that span reads YS.

This sequence belongs to the dihydroorotate dehydrogenase family. Type 2 subfamily. Monomer. FMN is required as a cofactor.

The protein localises to the cell membrane. The enzyme catalyses (S)-dihydroorotate + a quinone = orotate + a quinol. The protein operates within pyrimidine metabolism; UMP biosynthesis via de novo pathway; orotate from (S)-dihydroorotate (quinone route): step 1/1. Catalyzes the conversion of dihydroorotate to orotate with quinone as electron acceptor. The protein is Dihydroorotate dehydrogenase (quinone) of Shewanella oneidensis (strain ATCC 700550 / JCM 31522 / CIP 106686 / LMG 19005 / NCIMB 14063 / MR-1).